Here is a 192-residue protein sequence, read N- to C-terminus: Ion-translocating oxidoreductase complex subunit A (192 aa).

6 helical membrane passes run 5–25, 39–59, 63–83, 102–122, 134–154, and 171–191; these read ILLI…FLGL, VGMG…AYLV, ILIP…VIAV, LLGI…VALL, VVYG…FAAL, and SIAL…TGLV.

Belongs to the NqrDE/RnfAE family. The complex is composed of six subunits: RnfA, RnfB, RnfC, RnfD, RnfE and RnfG.

The protein resides in the cell inner membrane. Its function is as follows. Part of a membrane-bound complex that couples electron transfer with translocation of ions across the membrane. This chain is Ion-translocating oxidoreductase complex subunit A, found in Haemophilus influenzae (strain ATCC 51907 / DSM 11121 / KW20 / Rd).